The following is a 366-amino-acid chain: Ribosomal RNA large subunit methyltransferase M (366 aa).

Residues Ser-188, 221 to 224 (CPGG), Asp-240, Asp-260, and Asp-277 each bind S-adenosyl-L-methionine. The Proton acceptor role is filled by Lys-306.

It belongs to the class I-like SAM-binding methyltransferase superfamily. RNA methyltransferase RlmE family. RlmM subfamily. As to quaternary structure, monomer.

Its subcellular location is the cytoplasm. The enzyme catalyses cytidine(2498) in 23S rRNA + S-adenosyl-L-methionine = 2'-O-methylcytidine(2498) in 23S rRNA + S-adenosyl-L-homocysteine + H(+). Its function is as follows. Catalyzes the 2'-O-methylation at nucleotide C2498 in 23S rRNA. The protein is Ribosomal RNA large subunit methyltransferase M of Salmonella agona (strain SL483).